The chain runs to 399 residues: Tyrosine--tRNA ligase (399 aa).

Residues 42–51 carry the 'HIGH' region motif; that stretch reads PTAPDLHLGH. Positions 226-230 match the 'KMSKS' region motif; it reads KMSKS. K229 contributes to the ATP binding site. An S4 RNA-binding domain is found at 337–398; that stretch reads IAIANLLKDA…GKRKFARITV (62 aa).

Belongs to the class-I aminoacyl-tRNA synthetase family. TyrS type 2 subfamily. Homodimer.

The protein localises to the cytoplasm. The catalysed reaction is tRNA(Tyr) + L-tyrosine + ATP = L-tyrosyl-tRNA(Tyr) + AMP + diphosphate + H(+). Catalyzes the attachment of tyrosine to tRNA(Tyr) in a two-step reaction: tyrosine is first activated by ATP to form Tyr-AMP and then transferred to the acceptor end of tRNA(Tyr). This Colwellia psychrerythraea (strain 34H / ATCC BAA-681) (Vibrio psychroerythus) protein is Tyrosine--tRNA ligase.